The following is a 495-amino-acid chain: Myocyte-specific enhancer factor 2A (495 aa).

The MADS-box domain maps to 3–57 (RKKIQITRIMDERNRQVTFTKRKFGLMKKAYELSVLCDCEIALIIFNSSNKLFQY). Positions 58–86 (ASTDMDKVLLKYTEYNEPHESRTNSDIVE) form a DNA-binding region, mef2-type. Residue Ser59 is modified to Phosphoserine; by CK2. Position 98 is a phosphoserine (Ser98). Residues 175–225 (AESSMLSPPPATLHRNVSPGAPQRPPSTGSAGGMLSTTDLTVPNGAGNGPV) are disordered. Ser235 carries the post-translational modification Phosphoserine. A disordered region spans residues 242 to 271 (TGANSVGKVMPTKSPPPPGGGSVGMNSRKP). Lys249 carries the post-translational modification N6-acetyllysine. Position 255 is a phosphoserine (Ser255). The tract at residues 266–283 (MNSRKPDLRVVIPPSSKG) is required for interaction with MAPKs. Phosphothreonine; by MAPK7 and MAPK14 occurs at positions 304 and 311. Phosphoserine; by MAPK7 is present on Ser347. A compositionally biased stretch (polar residues) spans 382–394 (SNLSINTNQNINI). A disordered region spans residues 382–495 (SNLSINTNQN…KRMRMDTWVT (114 aa)). Lys395 carries the post-translational modification N6-acetyllysine; alternate. A Glycyl lysine isopeptide (Lys-Gly) (interchain with G-Cter in SUMO); alternate cross-link involves residue Lys395. Phosphoserine; by CDK5 is present on Ser400. Thr407 bears the Phosphothreonine mark. Pro residues predominate over residues 421-433 (QQPPPQPPQPQPQ). A Phosphoserine modification is found at Ser441. The segment covering 441–454 (SPVDSLSSSSSSYD) has biased composition (low complexity). 2 stretches are compositionally biased toward basic and acidic residues: residues 455-465 (GSDREDPRGDF) and 476-495 (NAED…TWVT).

As to quaternary structure, binds DNA as a homo- or heterodimer. Dimerizes with MEF2D. Interacts with HDAC7. Interacts with PIAS1; the interaction enhances sumoylation. Interacts with HDAC4, HDAC9 and SLC2A4RG. Interacts (via the N-terminal) with MAPK7; the interaction results in the phosphorylation and transcriptional activity of MEF2A. Constitutive phosphorylation on Ser-400 promotes Lys-395 sumoylation thus preventing acetylation at this site. Dephosphorylation on Ser-400 by PPP3CA upon neuron depolarization promotes a switch from sumoylation to acetylation on residue Lys-395 leading to inhibition of dendrite claw differentiation. Phosphorylation on Thr-304 and Thr-311 are the main sites involved in p38 MAPK signaling and activate transcription. Phosphorylated on these sites by MAPK14/p38alpha and MAPK11/p38beta, but not by MAPK13/p38delta nor by MAPK12/p38gamma. Phosphorylation on Ser-400 by CDK5 induced by neurotoxicity inhibits MEF2A transcriptional activation leading to apoptosis of cortical neurons. Phosphorylation on Thr-304, Thr-311 and Ser-347 can be induced by EGF. In terms of processing, sumoylation on Lys-395 is enhanced by PIAS1 and represses transcriptional activity. Phosphorylation on Ser-400 is required for sumoylation. Has no effect on nuclear location nor on DNA binding. Sumoylated with SUMO1 and, to a lesser extent with SUMO2 and SUMO3. PIASx facilitates sumoylation in postsynaptic dendrites in the cerebellar cortex and promotes their morphogenesis. Post-translationally, acetylation on Lys-395 activates transcriptional activity. Acetylated by p300 on several sites in diffentiating myocytes. Acetylation on Lys-4 increases DNA binding and transactivation. Hyperacetylation by p300 leads to enhanced cardiac myocyte growth and heart failure. Proteolytically cleaved in cerebellar granule neurons on several sites by caspase 3 and caspase 7 following neurotoxicity. Preferentially cleaves the CDK5-mediated hyperphosphorylated form which leads to neuron apoptosis and transcriptional inactivation.

The protein resides in the nucleus. Transcriptional activator which binds specifically to the MEF2 element, 5'-YTA[AT](4)TAR-3', found in numerous muscle-specific genes. Also involved in the activation of numerous growth factor- and stress-induced genes. Mediates cellular functions not only in skeletal and cardiac muscle development, but also in neuronal differentiation and survival. Plays diverse roles in the control of cell growth, survival and apoptosis via p38 MAPK signaling in muscle-specific and/or growth factor-related transcription. In cerebellar granule neurons, phosphorylated and sumoylated MEF2A represses transcription of NUR77 promoting synaptic differentiation. Associates with chromatin to the ZNF16 promoter. The chain is Myocyte-specific enhancer factor 2A (Mef2a) from Rattus norvegicus (Rat).